Here is a 31-residue protein sequence, read N- to C-terminus: Cytochrome b6-f complex subunit 6 (31 aa).

The helical transmembrane segment at 4–26 threads the bilayer; the sequence is LTSYFGFLLAALTITSALFIGLS.

Belongs to the PetL family. In terms of assembly, the 4 large subunits of the cytochrome b6-f complex are cytochrome b6, subunit IV (17 kDa polypeptide, PetD), cytochrome f and the Rieske protein, while the 4 small subunits are PetG, PetL, PetM and PetN. The complex functions as a dimer.

Its subcellular location is the plastid. It is found in the chloroplast thylakoid membrane. Functionally, component of the cytochrome b6-f complex, which mediates electron transfer between photosystem II (PSII) and photosystem I (PSI), cyclic electron flow around PSI, and state transitions. PetL is important for photoautotrophic growth as well as for electron transfer efficiency and stability of the cytochrome b6-f complex. The protein is Cytochrome b6-f complex subunit 6 of Aethionema cordifolium (Lebanon stonecress).